Here is a 270-residue protein sequence, read N- to C-terminus: Putative hydro-lyase H16_B1759 (270 aa).

The protein belongs to the D-glutamate cyclase family.

The sequence is that of Putative hydro-lyase H16_B1759 from Cupriavidus necator (strain ATCC 17699 / DSM 428 / KCTC 22496 / NCIMB 10442 / H16 / Stanier 337) (Ralstonia eutropha).